Reading from the N-terminus, the 134-residue chain is MKTIHVSVVTPDGPVYESEVEMVSTRAQSGELGILHGHIPMVAPLQIGAVRLKKASSTELVAVSGGFLEVRPDKVTILAQAAETAEEIDVARAEEAKKRAEMRLDSKQDDVDVKRAEIALKRAVNRLDISQRKF.

Belongs to the ATPase epsilon chain family. In terms of assembly, F-type ATPases have 2 components, CF(1) - the catalytic core - and CF(0) - the membrane proton channel. CF(1) has five subunits: alpha(3), beta(3), gamma(1), delta(1), epsilon(1). CF(0) has three main subunits: a, b and c.

Its subcellular location is the cell membrane. Functionally, produces ATP from ADP in the presence of a proton gradient across the membrane. The chain is ATP synthase epsilon chain (atpC) from Priestia megaterium (strain ATCC 12872 / QMB1551) (Bacillus megaterium).